The chain runs to 152 residues: Transcriptional regulator MraZ (152 aa).

SpoVT-AbrB domains lie at 7–51 and 89–132; these read KERH…APDR and LEMV…DPQR.

The protein belongs to the MraZ family. Forms oligomers.

It localises to the cytoplasm. The protein localises to the nucleoid. This is Transcriptional regulator MraZ from Pelodictyon phaeoclathratiforme (strain DSM 5477 / BU-1).